A 1438-amino-acid chain; its full sequence is MDLPPDSRTALRDWLTEQLADLLGEPLADVRALADDDDLLGCGLDSIRLMYLQERLRARGSTLDFAQLAQRPCLGAWLDLLACADRLSAPATVALPTVQDRDQPFELSSVQQAYWLGRGAGEVLGNVSCHAFLEFRTRDVDPQRLAAAAECVRQRHPMLRARFFDGRQQILPTPPLSCFDLQDWRTLQVDEAERDWQALRDWRAHECLAVERGQVFLLGLVRMPGGEDRLWLSLDLLAADVESLRLLLAELGVAYLAPERLAEPPALHFADYLARRAAQRAEAAARARDYWLERLPRLPDAPALPLACAPESIRQPRTRRLAFQLSAGESRRLERLAAQHGVTLSSVFGCAFALVLARWSESAEFLLNVPLFDRHADDPRIGEVIADFTTLLLLECRMQAGVSFAEAVKSFQRNLHGAIDHAAFPALEVLREARRQGQPRSAPVVFASNLGEEGFVPAAFRDAFGDLHDMLSQTPQVWLDHQLYRVGDGILLAWDSVVGLFPEGLPETMFEAYVGLLQRLCDSTWEQPADLPLPWAQQARRALLNGQPACATARTLHRDFFLRAAEAPDADALLYRDQRVTRGELAERALRIAGGLREAGVRPGDAVEVSLPRGPQQVAAVFGVLAAGACYVPLDIDQPPARRRLIEEAAGVCLAITEEDDPQALPPRLDVQRLLRGPALAAPVPLAPQASAYVIYTSGSTGVPKGVEVSHAAAINTIDALLDLLRVDAADRLLAVSALDFDLSVFDLFGGLGAGASLVLPAQEQARDAAAWAEAIQRHAVSLWNSAPALLEMALSLPASQADYRSLRAVLLSGDWVALDLPGRLRPRCAEGCRLHVLGGATEAGIWSNLQSVDTVPPHWRSIPYGRPLPGQAYRVVDAHGRDVPDLVVGELWIGGASLARGYRNDPELSARRFVHDAQGRWYRTGDRGRYWDDGTLEFLGRVDQQVKVRGQRIELGEVEAALCAQAGVESACAAVLGGGVASLGAVLVPRLAPRAEGSMELPAAQPFAGLAEAEAVLTREILGALLEAPLELDDGLRRRWLDWLADSAASALPPLDEALRRLGWQAAGLTAMGNALRGLLAGEQAPAALLLDPWLAPQAVAARLPDGREALARLLEALPTPAAGERLRVAVLDTRAGLWLDQGMASLLRPGLELTLFERSRVLLDAAATRLPERIVVQALDDGLLPAEHLGRYDRVISFAALHAYAASREGLALAAALLRPQGRLLLVDLLCESPLALLGAALLDDRPLRLAELPSLLADLAAAGLAPRCLWRSERIALVEALAPGLGLDAAALQAGLEQRLPQAMRPERLWCLPSLPLNGNGKVDRRRLAESMTRALGECRDEPSAEEPLEAHEQALAECWEAVLKRPVRRREASFFSLGGDSLLATRLLAGIRERFGVRLGMADFYRQPTLAGLARHLQAQTVEIEETQLEEGVL.

The Carrier 1 domain maps to 6–85 (DSRTALRDWL…AWLDLLACAD (80 aa)). Serine 46 carries the post-translational modification O-(pantetheine 4'-phosphoryl)serine. Positions 136 to 442 (RTRDVDPQRL…ARRQGQPRSA (307 aa)) are condensation/cyclization. Residues 563–950 (RAAEAPDADA…GRVDQQVKVR (388 aa)) are adenylation. A Carrier 2 domain is found at 1350–1425 (EPLEAHEQAL…GLARHLQAQT (76 aa)). Serine 1385 is subject to O-(pantetheine 4'-phosphoryl)serine.

This sequence belongs to the NRP synthetase family. Pantetheine 4'-phosphate is required as a cofactor.

It carries out the reaction holo-[peptidyl-carrier protein] + L-cysteine + ATP = L-cysteinyl-[peptidyl-carrier protein] + AMP + diphosphate. Its pathway is siderophore biosynthesis. It participates in antifungal biosynthesis. Functionally, involved in the biosynthesis of the siderophore pyochelin. Accepts salicylate activated by PchD at the first peptidyl carrier domain (ArCP), and activates and fixes one molecule of cysteine at the second peptidyl carrier domain (PCP1) via a thioester linkage to the phosphopanthetheine moiety. Then catalyzes the condensation reaction between the salicylate bound to the first site and the cysteine bound to the second site, and the cyclization of the cysteine to form the salicyl-thiazolinyl-S-PCP1 intermediate at the second site. When this intermediate is released by the action of a thioesterase, it produces the antifungal antibiotic dihydroaeruginoic acid (Dha or hydroxyphenyl-thiazolinyl-carboxylate). This chain is Pyochelin synthetase PchE, found in Pseudomonas aeruginosa (strain UCBPP-PA14).